Here is a 327-residue protein sequence, read N- to C-terminus: Thiamine thiazole synthase (327 aa).

Residues C86, 107 to 108 (EA), G115, and V182 contribute to the substrate site. C216 bears the 2,3-didehydroalanine (Cys) mark. Residues D218, H233, M285, and 295–297 (RMG) contribute to the substrate site.

It belongs to the THI4 family. Homooctamer. Fe cation serves as cofactor. Post-translationally, during the catalytic reaction, a sulfide is transferred from Cys-216 to a reaction intermediate, generating a dehydroalanine residue.

Its subcellular location is the cytoplasm. It is found in the nucleus. The catalysed reaction is [ADP-thiazole synthase]-L-cysteine + glycine + NAD(+) = [ADP-thiazole synthase]-dehydroalanine + ADP-5-ethyl-4-methylthiazole-2-carboxylate + nicotinamide + 3 H2O + 2 H(+). Involved in biosynthesis of the thiamine precursor thiazole. Catalyzes the conversion of NAD and glycine to adenosine diphosphate 5-(2-hydroxyethyl)-4-methylthiazole-2-carboxylic acid (ADT), an adenylated thiazole intermediate. The reaction includes an iron-dependent sulfide transfer from a conserved cysteine residue of the protein to a thiazole intermediate. The enzyme can only undergo a single turnover, which suggests it is a suicide enzyme. May have additional roles in adaptation to various stress conditions and in DNA damage tolerance. The protein is Thiamine thiazole synthase of Aspergillus oryzae (strain ATCC 42149 / RIB 40) (Yellow koji mold).